Here is a 460-residue protein sequence, read N- to C-terminus: Elongation factor 1-alpha (460 aa).

At Gly-2 the chain carries N,N,N-trimethylglycine. Lys-3 is modified (N6,N6-dimethyllysine; alternate). The residue at position 3 (Lys-3) is an N6-methyllysine; alternate. The tr-type G domain maps to Lys-6–Thr-241. Residues Gly-15–Ser-22 are G1. Gly-15 to Ser-22 lines the GTP pocket. N6-methyllysine is present on Lys-31. The G2 stretch occupies residues Gly-71–Asp-75. Lys-80 is subject to N6,N6,N6-trimethyllysine. Residues Asp-92–Gly-95 form a G3 region. Residues Asp-92–His-96 and Asn-154–Asp-157 each bind GTP. A G4 region spans residues Asn-154 to Asp-157. Residues Ser-193 to Phe-195 form a G5 region. N6,N6-dimethyllysine; alternate is present on Lys-317. At Lys-317 the chain carries N6-methyllysine; alternate. Position 391 is an N6-methyllysine (Lys-391).

It belongs to the TRAFAC class translation factor GTPase superfamily. Classic translation factor GTPase family. EF-Tu/EF-1A subfamily.

The protein localises to the cytoplasm. This protein promotes the GTP-dependent binding of aminoacyl-tRNA to the A-site of ribosomes during protein biosynthesis. In Coccidioides immitis (strain RS) (Valley fever fungus), this protein is Elongation factor 1-alpha (TEF).